Consider the following 349-residue polypeptide: UDP-N-acetylenolpyruvoylglucosamine reductase (349 aa).

The FAD-binding PCMH-type domain occupies 26–197; that stretch reads FDARARVAAR…VAVTFRLPKA (172 aa). Arg-173 is an active-site residue. The active-site Proton donor is the Ser-249. Residue Glu-345 is part of the active site.

It belongs to the MurB family. The cofactor is FAD.

Its subcellular location is the cytoplasm. The catalysed reaction is UDP-N-acetyl-alpha-D-muramate + NADP(+) = UDP-N-acetyl-3-O-(1-carboxyvinyl)-alpha-D-glucosamine + NADPH + H(+). Its pathway is cell wall biogenesis; peptidoglycan biosynthesis. Functionally, cell wall formation. The chain is UDP-N-acetylenolpyruvoylglucosamine reductase from Burkholderia pseudomallei (strain 1710b).